A 438-amino-acid polypeptide reads, in one-letter code: Transmembrane protein 184C (438 aa).

7 helical membrane-spanning segments follow: residues leucine 17–leucine 37, alanine 48–leucine 68, isoleucine 86–isoleucine 106, tyrosine 179–tyrosine 199, tyrosine 212–tyrosine 232, valine 254–isoleucine 274, and alanine 287–alanine 307. The interval proline 358–serine 438 is disordered. Low complexity-rich tracts occupy residues serine 374–methionine 390 and threonine 404–threonine 413. Position 422 is a phosphoserine (serine 422). The segment covering isoleucine 425–serine 438 has biased composition (basic and acidic residues).

Belongs to the TMEM184 family.

It localises to the membrane. Functionally, possible tumor suppressor which may play a role in cell growth. This chain is Transmembrane protein 184C (TMEM184C), found in Pongo abelii (Sumatran orangutan).